Reading from the N-terminus, the 143-residue chain is Large ribosomal subunit protein uL11 (143 aa).

It belongs to the universal ribosomal protein uL11 family. Part of the ribosomal stalk of the 50S ribosomal subunit. Interacts with L10 and the large rRNA to form the base of the stalk. L10 forms an elongated spine to which L12 dimers bind in a sequential fashion forming a multimeric L10(L12)X complex. In terms of processing, one or more lysine residues are methylated.

Forms part of the ribosomal stalk which helps the ribosome interact with GTP-bound translation factors. In Chromohalobacter salexigens (strain ATCC BAA-138 / DSM 3043 / CIP 106854 / NCIMB 13768 / 1H11), this protein is Large ribosomal subunit protein uL11.